The primary structure comprises 276 residues: Large ribosomal subunit protein uL2 (276 aa).

Positions Gly-223 to Lys-276 are disordered. The segment covering Asp-230–Ala-240 has biased composition (basic and acidic residues). Positions Leu-257 to Lys-276 are enriched in basic residues.

The protein belongs to the universal ribosomal protein uL2 family. Part of the 50S ribosomal subunit. Forms a bridge to the 30S subunit in the 70S ribosome.

In terms of biological role, one of the primary rRNA binding proteins. Required for association of the 30S and 50S subunits to form the 70S ribosome, for tRNA binding and peptide bond formation. It has been suggested to have peptidyltransferase activity; this is somewhat controversial. Makes several contacts with the 16S rRNA in the 70S ribosome. This is Large ribosomal subunit protein uL2 from Thermus thermophilus (strain ATCC BAA-163 / DSM 7039 / HB27).